Consider the following 248-residue polypeptide: 26.2 kDa heat shock protein, mitochondrial (248 aa).

The transit peptide at 1-32 (MASTVALKGRPLATLLRQLLAADAPPAATGRP) directs the protein to the mitochondrion. The disordered stretch occupies residues 26 to 48 (PAATGRPVAAAPAASGKPVTAPA). One can recognise a sHSP domain in the interval 139–248 (ATAAARRGGW…RKDVFQVNVE (110 aa)).

This sequence belongs to the small heat shock protein (HSP20) family. In terms of assembly, may form oligomeric structures.

The protein localises to the mitochondrion. The polypeptide is 26.2 kDa heat shock protein, mitochondrial (HSP26.2) (Oryza sativa subsp. japonica (Rice)).